A 301-amino-acid polypeptide reads, in one-letter code: NDP-polyphosphate phosphotransferase 3 (301 aa).

The span at 1–12 shows a compositional bias: basic and acidic residues; that stretch reads MNRNGSTKDPRR. Residues 1–21 are disordered; the sequence is MNRNGSTKDPRRMTGAATGEI.

The protein belongs to the polyphosphate kinase 2 (PPK2) family. Class I subfamily. It depends on Mg(2+) as a cofactor.

It catalyses the reaction [phosphate](n) + ATP = [phosphate](n+1) + ADP. The catalysed reaction is [phosphate](n) + CTP = [phosphate](n+1) + CDP. It carries out the reaction [phosphate](n) + GTP = [phosphate](n+1) + GDP. The enzyme catalyses [phosphate](n) + UTP = [phosphate](n+1) + UDP. Its function is as follows. Uses inorganic polyphosphate (polyP) as a donor to convert NDP to NTP. PolyP hydrolysis is slightly faster with UDP, but it can also use ADP, GDP and CDP. The sequence is that of NDP-polyphosphate phosphotransferase 3 from Ruegeria pomeroyi (strain ATCC 700808 / DSM 15171 / DSS-3) (Silicibacter pomeroyi).